The following is a 392-amino-acid chain: MPCSWKLLGFLSVHEPMPTAASFGIEMFNVTTQVLGSALNGTLSKDNCPDTEWWSWLNAIQAPFLWVLFLLAALENLFVLSVFFLHKNSCTVAEIYLGNLAAADLILACGLPFWAITIANNFDWVFGEVLCRVVNTMIYMNLYSSICFLMLVSIDRYLALVKTMSMGRMRGVRWAKLYSLVIWGCTLLLSSPMLVFRTMREYSEEGHNVTACVIVYPSRSWEVFTNVLLNLVGFLLPLSVITFCTVRILQVLRNNEMKKFKEVQTERKATVLVLAVLGLFVLCWVPFQISTFLDTLLRLGVLSGCWDEHAVDVITQISSYVAYSNSGLNPLVYVIVGKRFRKKSREVYRVLCQKGGCMGEPVQMENSMGTLRTSISVERQIHKLQDWAGKKQ.

Over 1-61 (MPCSWKLLGF…EWWSWLNAIQ (61 aa)) the chain is Extracellular. N-linked (GlcNAc...) asparagine glycans are attached at residues Asn-29 and Asn-40. A helical transmembrane segment spans residues 62–85 (APFLWVLFLLAALENLFVLSVFFL). At 86-94 (HKNSCTVAE) the chain is on the cytoplasmic side. Residues 95-119 (IYLGNLAAADLILACGLPFWAITIA) traverse the membrane as a helical segment. The Extracellular segment spans residues 120–132 (NNFDWVFGEVLCR). An intrachain disulfide couples Cys-131 to Cys-212. Residues 133 to 154 (VVNTMIYMNLYSSICFLMLVSI) traverse the membrane as a helical segment. Residues 155-176 (DRYLALVKTMSMGRMRGVRWAK) lie on the Cytoplasmic side of the membrane. Phosphotyrosine is present on Tyr-157. Residues 177–199 (LYSLVIWGCTLLLSSPMLVFRTM) form a helical membrane-spanning segment. At 200 to 222 (REYSEEGHNVTACVIVYPSRSWE) the chain is on the extracellular side. Residue Asn-208 is glycosylated (N-linked (GlcNAc...) asparagine). A helical transmembrane segment spans residues 223–249 (VFTNVLLNLVGFLLPLSVITFCTVRIL). Over 250-268 (QVLRNNEMKKFKEVQTERK) the chain is Cytoplasmic. The helical transmembrane segment at 269–293 (ATVLVLAVLGLFVLCWVPFQISTFL) threads the bilayer. The Extracellular portion of the chain corresponds to 294-312 (DTLLRLGVLSGCWDEHAVD). Residues 313–336 (VITQISSYVAYSNSGLNPLVYVIV) form a helical membrane-spanning segment. At 337–392 (GKRFRKKSREVYRVLCQKGGCMGEPVQMENSMGTLRTSISVERQIHKLQDWAGKKQ) the chain is on the cytoplasmic side. Tyr-348 is modified (phosphotyrosine). Cys-352 is lipidated: S-palmitoyl cysteine. Phosphoserine is present on Ser-367. Thr-370 carries the post-translational modification Phosphothreonine. Phosphoserine; by GRK6 is present on residues Ser-374 and Ser-376.

Belongs to the G-protein coupled receptor 1 family. Bradykinin receptor subfamily. BDKRB2 sub-subfamily. As to quaternary structure, forms a complex with PECAM1 and GNAQ. Interacts with PECAM1.

Its subcellular location is the cell membrane. Functionally, receptor for bradykinin. It is associated with G proteins that activate a phosphatidylinositol-calcium second messenger system. The polypeptide is B2 bradykinin receptor (Bdkrb2) (Mus musculus (Mouse)).